A 309-amino-acid chain; its full sequence is uncharacterized protein (309 aa).

The segment covering 1-16 has biased composition (basic residues); sequence MAGNSRRRGAVRKAGT. The disordered stretch occupies residues 1-70; that stretch reads MAGNSRRRGA…AKRTEETETV (70 aa). S-adenosyl-L-methionine contacts are provided by glycine 261, isoleucine 281, and leucine 290.

It belongs to the class IV-like SAM-binding methyltransferase superfamily. RNA methyltransferase TrmH family.

This is an uncharacterized protein from Mycobacterium avium (strain 104).